The following is a 402-amino-acid chain: Bacillibactin exporter (402 aa).

11 helical membrane-spanning segments follow: residues isoleucine 4–valine 24, valine 39–tyrosine 59, isoleucine 69–threonine 89, leucine 104–phenylalanine 124, phenylalanine 162–leucine 182, tryptophan 212–phenylalanine 232, valine 247–alanine 267, methionine 278–tryptophan 298, phenylalanine 302–alanine 322, phenylalanine 342–methionine 362, and isoleucine 368–valine 388.

This sequence belongs to the major facilitator superfamily.

It localises to the cell membrane. Its function is as follows. Involved in secretion of bacillibactin. This chain is Bacillibactin exporter (ymfD), found in Bacillus subtilis (strain 168).